We begin with the raw amino-acid sequence, 417 residues long: NADH-quinone oxidoreductase subunit D (417 aa).

This sequence belongs to the complex I 49 kDa subunit family. In terms of assembly, NDH-1 is composed of 14 different subunits. Subunits NuoB, C, D, E, F, and G constitute the peripheral sector of the complex.

The protein resides in the cell inner membrane. The enzyme catalyses a quinone + NADH + 5 H(+)(in) = a quinol + NAD(+) + 4 H(+)(out). In terms of biological role, NDH-1 shuttles electrons from NADH, via FMN and iron-sulfur (Fe-S) centers, to quinones in the respiratory chain. The immediate electron acceptor for the enzyme in this species is believed to be ubiquinone. Couples the redox reaction to proton translocation (for every two electrons transferred, four hydrogen ions are translocated across the cytoplasmic membrane), and thus conserves the redox energy in a proton gradient. The protein is NADH-quinone oxidoreductase subunit D of Cupriavidus metallidurans (strain ATCC 43123 / DSM 2839 / NBRC 102507 / CH34) (Ralstonia metallidurans).